Consider the following 579-residue polypeptide: Plastidial pyruvate kinase 2 (579 aa).

Residues 1-63 (MAQVVATRSI…SRRVVDTTVR (63 aa)) constitute a chloroplast transit peptide. Polar residues predominate over residues 6–24 (ATRSIQGSMLSPNGGSVST). The disordered stretch occupies residues 6–26 (ATRSIQGSMLSPNGGSVSTRS). Arginine 140 serves as a coordination point for substrate. 4 residues coordinate K(+): asparagine 142, serine 144, aspartate 175, and threonine 176. ATP is bound at residue 142–145 (NMSH). Residue arginine 182 coordinates ATP. Lysine 325 lines the substrate pocket. Glutamate 327 is a Mg(2+) binding site. Positions 350, 351, and 383 each coordinate substrate. Aspartate 351 provides a ligand contact to Mg(2+).

This sequence belongs to the pyruvate kinase family. In terms of assembly, oligomer of alpha and beta subunits. The cofactor is Mg(2+). K(+) is required as a cofactor. As to expression, mostly expressed in seeds, and, to a lower extent, in roots, leaves (veins and trichomes), inflorescences, siliques, pollen (grains and tubes) and flowers (sepals and petals).

It localises to the plastid. The protein localises to the chloroplast stroma. It is found in the mitochondrion. It carries out the reaction pyruvate + ATP = phosphoenolpyruvate + ADP + H(+). It participates in carbohydrate degradation; glycolysis; pyruvate from D-glyceraldehyde 3-phosphate: step 5/5. Functionally, required for plastidial pyruvate kinase activity. Involved in seed oil accumulation, embryo development and seed storage compounds mobilization upon germination. This chain is Plastidial pyruvate kinase 2 (PKP2), found in Arabidopsis thaliana (Mouse-ear cress).